The primary structure comprises 150 residues: Phylloplanin (150 aa).

Positions 1-23 (MASAKIFLIFLLAALIATPAAFA) are cleaved as a signal peptide.

In terms of processing, probably covalently linked to cuticular lipids and/or trichome exudate diterpens or sugar esters in order to increase the solubility in exudate and the dispersion on the leaf surface. In terms of tissue distribution, expressed in small glandular secreting trichomes (SGTs).

It localises to the secreted. Inhibits spore germination and leaf infection by fungal pathogens. This chain is Phylloplanin, found in Nicotiana tabacum (Common tobacco).